Consider the following 639-residue polypeptide: UvrABC system protein C (639 aa).

Residues M1–D16 are compositionally biased toward acidic residues. The segment at M1–R28 is disordered. Residues Q17–P27 are compositionally biased toward low complexity. The GIY-YIG domain maps to S42–I120. Residues K230 to V265 form the UVR domain.

Belongs to the UvrC family. As to quaternary structure, interacts with UvrB in an incision complex.

The protein resides in the cytoplasm. Its function is as follows. The UvrABC repair system catalyzes the recognition and processing of DNA lesions. UvrC both incises the 5' and 3' sides of the lesion. The N-terminal half is responsible for the 3' incision and the C-terminal half is responsible for the 5' incision. The protein is UvrABC system protein C of Rhodospirillum rubrum (strain ATCC 11170 / ATH 1.1.1 / DSM 467 / LMG 4362 / NCIMB 8255 / S1).